A 1019-amino-acid polypeptide reads, in one-letter code: Enteropeptidase (1019 aa).

Gly2 carries N-myristoyl glycine lipidation. Residues 2-18 (GSKRGISSRHHSLSSYE) are Cytoplasmic-facing. Residues 19-47 (IMFAALFAILVVLCAGLIAVSCLTIKESQ) form a helical; Signal-anchor for type II membrane protein membrane-spanning segment. The Extracellular portion of the chain corresponds to 48-1019 (RGAALGQSHE…FTEWIQSFLH (972 aa)). Residues 54–169 (QSHEARATFK…NSVDILDKLT (116 aa)) enclose the SEA domain. Asn116, Asn147, and Asn179 each carry an N-linked (GlcNAc...) asparagine glycan. One can recognise an LDL-receptor class A 1 domain in the interval 182 to 223 (IECLPGSSPCTDALTCIKADLFCDGEVNCPDGSDEDNKMCAT). Cystine bridges form between Cys184-Cys197, Cys191-Cys210, Cys204-Cys221, and Cys225-Cys253. Residues 225 to 334 (CDGRFLLTGS…VGFNATYTAF (110 aa)) form the CUB 1 domain. 8 N-linked (GlcNAc...) asparagine glycosylation sites follow: Asn328, Asn335, Asn388, Asn440, Asn470, Asn503, Asn534, and Asn630. Positions 342–504 (YEKINCNFED…ISLTYGICNG (163 aa)) constitute an MAM domain. An intrachain disulfide couples Cys524 to Cys552. The CUB 2 domain occupies 524–634 (CGGPFELWEP…GGFKANFTTG (111 aa)). An LDL-receptor class A 2 domain is found at 641-679 (EPCKADHFQCKNGECVPLVNLCDGHLHCEDGSDEADCVR). Intrachain disulfides connect Cys643–Cys655, Cys650–Cys668, and Cys662–Cys677. The SRCR domain maps to 678–771 (VRFFNGTTNN…LIRLQCNHKS (94 aa)). 3 N-linked (GlcNAc...) asparagine glycosylation sites follow: Asn682, Asn706, and Asn725. Intrachain disulfides connect Cys757–Cys767, Cys772–Cys896, and Cys810–Cys826. The 235-residue stretch at 785–1019 (IVGGSNAKEG…FTEWIQSFLH (235 aa)) folds into the Peptidase S1 domain. The active-site Charge relay system is His825. A glycan (N-linked (GlcNAc...) asparagine) is linked at Asn848. Asp876 (charge relay system) is an active-site residue. N-linked (GlcNAc...) asparagine glycosylation is found at Asn887, Asn909, and Asn949. Cystine bridges form between Cys910–Cys977, Cys941–Cys956, and Cys967–Cys995. Catalysis depends on Ser971, which acts as the Charge relay system.

This sequence belongs to the peptidase S1 family. In terms of assembly, heterodimer of a catalytic (light) chain and a multidomain (heavy) chain linked by a disulfide bond. Post-translationally, the chains are derived from a single precursor that is cleaved by a trypsin-like protease. Intestinal brush border.

It is found in the membrane. It catalyses the reaction Activation of trypsinogen by selective cleavage of 6-Lys-|-Ile-7 bond.. Its function is as follows. Responsible for initiating activation of pancreatic proteolytic proenzymes (trypsin, chymotrypsin and carboxypeptidase A). It catalyzes the conversion of trypsinogen to trypsin which in turn activates other proenzymes including chymotrypsinogen, procarboxypeptidases, and proelastases. This Homo sapiens (Human) protein is Enteropeptidase (TMPRSS15).